Reading from the N-terminus, the 84-residue chain is Sporulation-specific transcription factor SpoVIF (84 aa).

The protein resides in the cytoplasm. Transcription factor involved in spore coat assembly and spore resistance. Required for gene regulation during the latter stages of sporulation. Regulates the transcription of at least cgeA, cotG and cotS. May directly or indirectly control the function of the GerE protein. This is Sporulation-specific transcription factor SpoVIF from Bacillus subtilis (strain 168).